The primary structure comprises 186 residues: Ribosome-recycling factor (186 aa).

This sequence belongs to the RRF family.

It is found in the cytoplasm. Its function is as follows. Responsible for the release of ribosomes from messenger RNA at the termination of protein biosynthesis. May increase the efficiency of translation by recycling ribosomes from one round of translation to another. The polypeptide is Ribosome-recycling factor (Polaromonas sp. (strain JS666 / ATCC BAA-500)).